The sequence spans 328 residues: MASQPEEGFGERLRKEVTVDTSRGVRATSTAQAVENFEGWYADQRDTQMVVEEATTGERVGFRTPNRFTPEYREMLYAKAQSLERGLREEWGDLLHTAMVTLTASTTEEDGGPRPLVDHLRDLLSSWSAVYDALRHTLEDREFEYLAIIEPTTPAGNGPAGYAHIHLGVFVKGPVVAEQFQDVLDAHVKNSEGAGREAHRAVVEDDEDEAAVSIRRSARPDREDGIENLGAYLAAYMAGEYGVEALAMPAHVRAFYAAMWATGTQWFRPSNGAQRHMQPESDDEESVEEWEMVGIAPEGDLEDEIIEVDPEQPRDDPYRRLRTPPPGG.

A disordered region spans residues 296-328 (APEGDLEDEIIEVDPEQPRDDPYRRLRTPPPGG). A compositionally biased stretch (acidic residues) spans 299-310 (GDLEDEIIEVDP).

Its function is as follows. Possibly necessary for replication. This is an uncharacterized protein from Halobacterium sp. (strain GN101).